The sequence spans 216 residues: Thiopurine S-methyltransferase (216 aa).

S-adenosyl-L-methionine-binding residues include W10, L45, E66, and R123.

Belongs to the class I-like SAM-binding methyltransferase superfamily. TPMT family.

The protein resides in the cytoplasm. The enzyme catalyses S-adenosyl-L-methionine + a thiopurine = S-adenosyl-L-homocysteine + a thiopurine S-methylether.. This is Thiopurine S-methyltransferase from Pseudomonas putida (strain GB-1).